Here is a 1659-residue protein sequence, read N- to C-terminus: Fatty acid synthase subunit alpha (1659 aa).

Residues 114–139 (TQAQASGGAGTIAGAGSSTAPVTAPP) form a disordered region. The Carrier domain occupies 160–235 (AQAFEIVRTL…AALQKTFTGQ (76 aa)). Residue Ser-195 is modified to O-(pantetheine 4'-phosphoryl)serine. Residues 588 to 826 (GRSVLITGAG…LCLMFNTMCS (239 aa)) are ketoreductase (KR) domain. Residues 1030–1575 (KQLLHEVLIQ…QKGAQTIVVH (546 aa)) form the Ketosynthase family 3 (KS3) domain. Active-site for beta-ketoacyl synthase activity residues include Cys-1217, His-1458, and His-1499. Positions 1631–1659 (ETLLDPTPPQTNVDDRVARSIVQQESAEP) are disordered.

Belongs to the thiolase-like superfamily. Fungal fatty acid synthetase subunit alpha family. In terms of assembly, [Alpha(6)beta(6)] hexamers of two multifunctional subunits (alpha and beta). Post-translationally, 4'-phosphopantetheine is transferred from CoA to a specific serine of the acyl carrier domain by the C-terminal PPT domain. This modification is essential for activity because fatty acids are bound in thioester linkage to the sulfhydryl of the prosthetic group.

It catalyses the reaction acetyl-CoA + n malonyl-CoA + 2n NADPH + 4n H(+) = a long-chain-acyl-CoA + n CoA + n CO2 + 2n NADP(+).. The enzyme catalyses a fatty acyl-[ACP] + malonyl-[ACP] + H(+) = a 3-oxoacyl-[ACP] + holo-[ACP] + CO2. It carries out the reaction a (3R)-hydroxyacyl-[ACP] + NADP(+) = a 3-oxoacyl-[ACP] + NADPH + H(+). The protein operates within secondary metabolite biosynthesis. Fatty acid synthase subunit alpha; part of the gene cluster that mediates the biosynthesis of aspercryptins, linear lipopeptides built from six amino acids including 2 highly unusual and nonproteogenic amino acids, 2-amino-octanoic acid (2aoa) and 2-amino-dodecanol (2adol). The core structure of aspercryptins is as follows: Ser/Ala-Thr-Ile/Val-2aoa-Asn-2adol. The first step of aspercryptin biosynthesis is the generation of the fatty acid precursors, octanoic and dodecanoic acids, by the FAS subunits atnF and atnM. The fatty acid precursors are likely transformed into the corresponding alpha-amino fatty acids in three steps. First, they are hydroxylated by the cytochrome P450 monooxygenase atnE, then oxidized to the corresponding alpha-keto acids by the NAD(P)-dependent oxidoreductase atnD, and finally converted to the alpha-amino fatty acids by the PLP-dependent aminotransferases atnH or atnJ. the alpha-amino fatty acids, 2-amino-octanoic and 2-amino-dodecanoic acids, are recognized, activated, and covalently tethered to the NRPS atnA by its fourth and sixth adenylation domains. The second module of atnA is the Thr module and contains an epimerase (E) domain responsible for the epimerization of Thr to D-allo-Thr. Additionally, despite atnA having only one epimerase domain, the first amino acid of aspercryptin A1 is D-Ser, suggesting that serine is either loaded directly as D-Ser on the first module or that the epimerase domain in the threonine module epimerizes both L-Ser and L-Thr. After condensation of the hexapeptide of aspercryptin, the C-terminal reductase (TE) domain might be involved in the reductive release and production of the aldehyde hexapeptide. Further reduction would generate aspercryptins. The variety of aspercryptins produced reflects the flexibility of the atnA NRPS, allowing incorporation of alanine instead of serine, valine for isoleucine, and a C10 fatty amino alcohol instead of the C12 version. AtnB seems to be involved in the selectivity for Ile versus Val by the third module. Moreover, type B, C and D aspercryptins have an additional N-terminal cichorine, acetyl and propionyl group respectively. This chain is Fatty acid synthase subunit alpha, found in Emericella nidulans (strain FGSC A4 / ATCC 38163 / CBS 112.46 / NRRL 194 / M139) (Aspergillus nidulans).